A 178-amino-acid polypeptide reads, in one-letter code: Cytochrome c-type biogenesis protein CcmE (178 aa).

Over 1-8 (MNPRRKKR) the chain is Cytoplasmic. The chain crosses the membrane as a helical; Signal-anchor for type II membrane protein span at residues 9–29 (LAIVGSILIGIGVVSGLVLYA). Over 30-178 (LSQNIDLFFT…QLESKKTNSY (149 aa)) the chain is Periplasmic. Residues His-143 and Tyr-147 each coordinate heme. A disordered region spans residues 154 to 178 (EAAGQKHDKATYSDKQLESKKTNSY). Residues 157–178 (GQKHDKATYSDKQLESKKTNSY) show a composition bias toward basic and acidic residues.

This sequence belongs to the CcmE/CycJ family.

It is found in the cell inner membrane. Functionally, heme chaperone required for the biogenesis of c-type cytochromes. Transiently binds heme delivered by CcmC and transfers the heme to apo-cytochromes in a process facilitated by CcmF and CcmH. The sequence is that of Cytochrome c-type biogenesis protein CcmE from Colwellia psychrerythraea (strain 34H / ATCC BAA-681) (Vibrio psychroerythus).